A 67-amino-acid polypeptide reads, in one-letter code: Beta-defensin 103A (67 aa).

The N-terminal stretch at 1–22 (MRIHYLLFALLFLFLVPVPGHG) is a signal peptide. Cystine bridges form between Cys-33–Cys-62, Cys-40–Cys-55, and Cys-45–Cys-63.

This sequence belongs to the beta-defensin family.

It localises to the secreted. Exhibits antimicrobial activity against Gram-positive and Gram-negative bacteria. This chain is Beta-defensin 103A (DEFB103A), found in Pan troglodytes (Chimpanzee).